The primary structure comprises 210 residues: MAFHYPNGQPYSNHETKQPKKQGRHTSPTTLYGKRGMSLEEEINDSNQYYRLRDAAVIYKKPTPIQIVKVDYPARSQAVIKEAYFKQASTTDYNGIYQGHYVDFEAKETKNKTSFPFQNFHQHQIDHFRACLQQGGVCFVIMKFVPLQRLFVYPASLLITQWDNQATGGRKSIPLAAIVADGFEIQYQLNPSIPYLEAVDQLIARHHKGV.

The disordered stretch occupies residues 1-34 (MAFHYPNGQPYSNHETKQPKKQGRHTSPTTLYGK). The Mg(2+) site is built by threonine 90, aspartate 92, glutamate 105, and glutamine 124.

Belongs to the RecU family. It depends on Mg(2+) as a cofactor.

The protein resides in the cytoplasm. It catalyses the reaction Endonucleolytic cleavage at a junction such as a reciprocal single-stranded crossover between two homologous DNA duplexes (Holliday junction).. In terms of biological role, endonuclease that resolves Holliday junction intermediates in genetic recombination. Cleaves mobile four-strand junctions by introducing symmetrical nicks in paired strands. Promotes annealing of linear ssDNA with homologous dsDNA. Required for DNA repair, homologous recombination and chromosome segregation. The sequence is that of Holliday junction resolvase RecU from Latilactobacillus sakei subsp. sakei (strain 23K) (Lactobacillus sakei subsp. sakei).